We begin with the raw amino-acid sequence, 485 residues long: ATP-dependent 6-phosphofructokinase (485 aa).

Residues Gly-105, 171 to 172 (RG), and 196 to 199 (GDGT) contribute to the ATP site. Asp-197 is a Mg(2+) binding site. Substrate is bound by residues 225–227 (TID), 270–272 (MGR), Glu-323, and 378–381 (YMIR). Asp-227 (proton acceptor) is an active-site residue. The Peroxisomal targeting signal signature appears at 483 to 485 (SKL).

This sequence belongs to the phosphofructokinase type A (PFKA) family. PPi-dependent PFK group II subfamily. Atypical ATP-dependent clade 'X' sub-subfamily. In terms of assembly, homotetramer. Requires Mg(2+) as cofactor.

Its subcellular location is the glycosome. It catalyses the reaction beta-D-fructose 6-phosphate + ATP = beta-D-fructose 1,6-bisphosphate + ADP + H(+). The protein operates within carbohydrate degradation; glycolysis; D-glyceraldehyde 3-phosphate and glycerone phosphate from D-glucose: step 3/4. Its activity is regulated as follows. Allosterically activated by AMP. Functionally, catalyzes the phosphorylation of D-fructose 6-phosphate to fructose 1,6-bisphosphate by ATP, the first committing step of glycolysis. This chain is ATP-dependent 6-phosphofructokinase, found in Trypanosoma cruzi (strain CL Brener).